Reading from the N-terminus, the 476-residue chain is Adenosylhomocysteinase (476 aa).

Substrate-binding residues include Thr-67, Asp-142, and Glu-202. 203–205 (TTT) provides a ligand contact to NAD(+). Substrate is bound by residues Lys-232 and Asp-236. Residues Asn-237, 266 to 271 (GYGDVG), Glu-289, Asn-324, 345 to 347 (IGH), and Asn-390 contribute to the NAD(+) site.

It belongs to the adenosylhomocysteinase family. Requires NAD(+) as cofactor.

It is found in the cytoplasm. It carries out the reaction S-adenosyl-L-homocysteine + H2O = L-homocysteine + adenosine. It functions in the pathway amino-acid biosynthesis; L-homocysteine biosynthesis; L-homocysteine from S-adenosyl-L-homocysteine: step 1/1. Functionally, may play a key role in the regulation of the intracellular concentration of adenosylhomocysteine. In Prochlorococcus marinus (strain MIT 9313), this protein is Adenosylhomocysteinase.